A 723-amino-acid polypeptide reads, in one-letter code: Protein Aster-A (723 aa).

Over residues 1 to 18 the composition is skewed to low complexity; it reads MFDTTPHSGRSSPSSSPS. The interval 1–63 is disordered; that stretch reads MFDTTPHSGR…SGVSGTLSTQ (63 aa). Residues 28–38 are compositionally biased toward pro residues; sequence PSRPPSAPEPE. Positions 93–160 constitute a GRAM domain; the sequence is EDFRKLFSKL…KEVTCLKKEK (68 aa). Residues 257 to 337 form a disordered region; sequence SPSGAADRSQ…DGPTSNLGPL (81 aa). Residues S265, S269, and S273 each carry the phosphoserine modification. The span at 302-314 shows a compositional bias: polar residues; it reads DSQLDASSSQTVT. Positions 370 to 541 constitute a VASt domain; the sequence is SGRLLINSVF…ELAKAEKVSL (172 aa). The residue at position 418 (S418) is a Phosphoserine. The segment at 562 to 601 is disordered; it reads LSWRGHRDGPQHPDPDPCTQTSMHTSGSLSSRFSEPSVDQ. The span at 566–576 shows a compositional bias: basic and acidic residues; sequence GHRDGPQHPDP. The segment covering 579-595 has biased composition (polar residues); sequence CTQTSMHTSGSLSSRFS. Residues 610-630 form a helical membrane-spanning segment; sequence ALVLISIVLIVLIALNALLFY.

Its subcellular location is the endoplasmic reticulum membrane. It localises to the cell membrane. The protein resides in the cytoplasmic vesicle. It is found in the autophagosome. Functionally, cholesterol transporter that mediates non-vesicular transport of cholesterol from the plasma membrane (PM) to the endoplasmic reticulum (ER). Contains unique domains for binding cholesterol and the PM, thereby serving as a molecular bridge for the transfer of cholesterol from the PM to the ER. Plays a crucial role in cholesterol homeostasis and has the unique ability to localize to the PM based on the level of membrane cholesterol. In lipid-poor conditions localizes to the ER membrane and in response to excess cholesterol in the PM is recruited to the endoplasmic reticulum-plasma membrane contact sites (EPCS) which is mediated by the GRAM domain. At the EPCS, the sterol-binding VASt/ASTER domain binds to the cholesterol in the PM and facilitates its transfer from the PM to ER. May play a role in tumor progression. Plays a role in autophagy regulation and is required for biogenesis of the autophagosome. This function in autophagy requires its cholesterol-transfer activity. This chain is Protein Aster-A, found in Rattus norvegicus (Rat).